Consider the following 61-residue polypeptide: Bowman-Birk type proteinase inhibitor (61 aa).

7 cysteine pairs are disulfide-bonded: C4/C57, C5/C20, C8/C53, C10/C18, C27/C34, C31/C46, and C36/C44.

This sequence belongs to the Bowman-Birk serine protease inhibitor family.

In terms of biological role, strong inhibitor of trypsin with a 1:1 stoichiometry. Weaker inhibitor of chymotrypsin. The protein is Bowman-Birk type proteinase inhibitor of Erythrina variegata (Indian coral tree).